A 254-amino-acid chain; its full sequence is Small ribosomal subunit protein uS2 (254 aa).

A disordered region spans residues 225–254 (ALSERKREKDDAKLKEDEESKKASDKAEIQ). Residues 226–254 (LSERKREKDDAKLKEDEESKKASDKAEIQ) are compositionally biased toward basic and acidic residues.

The protein belongs to the universal ribosomal protein uS2 family.

This is Small ribosomal subunit protein uS2 from Cytophaga hutchinsonii (strain ATCC 33406 / DSM 1761 / CIP 103989 / NBRC 15051 / NCIMB 9469 / D465).